The primary structure comprises 452 residues: Bifunctional purine biosynthesis protein PurH (452 aa).

Positions 1–115 (MKRILVSLYE…KNWKKVKPAF (115 aa)) constitute an MGS-like domain.

It belongs to the PurH family.

It carries out the reaction (6R)-10-formyltetrahydrofolate + 5-amino-1-(5-phospho-beta-D-ribosyl)imidazole-4-carboxamide = 5-formamido-1-(5-phospho-D-ribosyl)imidazole-4-carboxamide + (6S)-5,6,7,8-tetrahydrofolate. The enzyme catalyses IMP + H2O = 5-formamido-1-(5-phospho-D-ribosyl)imidazole-4-carboxamide. It participates in purine metabolism; IMP biosynthesis via de novo pathway; 5-formamido-1-(5-phospho-D-ribosyl)imidazole-4-carboxamide from 5-amino-1-(5-phospho-D-ribosyl)imidazole-4-carboxamide (10-formyl THF route): step 1/1. It functions in the pathway purine metabolism; IMP biosynthesis via de novo pathway; IMP from 5-formamido-1-(5-phospho-D-ribosyl)imidazole-4-carboxamide: step 1/1. The polypeptide is Bifunctional purine biosynthesis protein PurH (Thermotoga maritima (strain ATCC 43589 / DSM 3109 / JCM 10099 / NBRC 100826 / MSB8)).